The primary structure comprises 438 residues: uncharacterized protein (438 aa).

The signal sequence occupies residues 1 to 19 (MKKLLLAASIICLASAGLA).

This is an uncharacterized protein from Rickettsia conorii (strain ATCC VR-613 / Malish 7).